Here is a 132-residue protein sequence, read N- to C-terminus: Small ribosomal subunit protein uS8 (132 aa).

This sequence belongs to the universal ribosomal protein uS8 family. As to quaternary structure, part of the 30S ribosomal subunit. Contacts proteins S5 and S12.

Functionally, one of the primary rRNA binding proteins, it binds directly to 16S rRNA central domain where it helps coordinate assembly of the platform of the 30S subunit. The polypeptide is Small ribosomal subunit protein uS8 (Rickettsia felis (strain ATCC VR-1525 / URRWXCal2) (Rickettsia azadi)).